The following is an 893-amino-acid chain: Ubiquitin-like protease 2 (893 aa).

The interval 538–800 is protease; that stretch reads PVVLLVKDIK…YNLILQQADK (263 aa). Catalysis depends on residues histidine 644, aspartate 678, and cysteine 743.

It belongs to the peptidase C48 family.

Its subcellular location is the nucleus. The protein localises to the cytoplasm. It is found in the cytosol. Its function is as follows. Protease that catalyzes two essential functions in the smo-1 pathway: processing of full-length smo-1 to their mature forms and deconjugation of smo-1 from targeted proteins. May deconjugate smo-1 from the cadherin protein hmr-1 and plays a role in its recruitment to and the maintenance of adherens junctions. Required for epidermal morphogenesis during embryonic development. In Caenorhabditis elegans, this protein is Ubiquitin-like protease 2.